Here is a 563-residue protein sequence, read N- to C-terminus: Mitochondrial distribution and morphology protein 34 (563 aa).

The 195-residue stretch at 1-195 (MAFNFNWSPL…LPAIIHRLSL (195 aa)) folds into the SMP-LTD domain. 2 disordered regions span residues 298–499 (ERGD…PHTP) and 531–563 (ARRQ…PKAL). Polar residues-rich tracts occupy residues 303–332 (AGTT…FSNR) and 346–357 (SLVNMNSATTGL). The segment covering 365-383 (SRSHPTRKKKNRVVNLRKP) has biased composition (basic residues). A compositionally biased stretch (low complexity) spans 386–407 (TESSESGESETASTTAVSEPTV). Polar residues-rich tracts occupy residues 458 to 471 (PSLT…INTQ) and 478 to 488 (YNQSASTSYTP). Positions 531-540 (ARRQHDDKTA) are enriched in basic and acidic residues.

Belongs to the MDM34 family. Component of the ER-mitochondria encounter structure (ERMES) or MDM complex, composed of MMM1, MDM10, MDM12 and MDM34.

The protein localises to the mitochondrion outer membrane. Component of the ERMES/MDM complex, which serves as a molecular tether to connect the endoplasmic reticulum (ER) and mitochondria. Components of this complex are involved in the control of mitochondrial shape and protein biogenesis, and function in nonvesicular lipid trafficking between the ER and mitochondria. MDM34 is required for the interaction of the ER-resident membrane protein MMM1 and the outer mitochondrial membrane-resident beta-barrel protein MDM10. The chain is Mitochondrial distribution and morphology protein 34 from Botryotinia fuckeliana (strain B05.10) (Noble rot fungus).